A 561-amino-acid polypeptide reads, in one-letter code: Putative transport protein ASA_2308 (561 aa).

Transmembrane regions (helical) follow at residues 8 to 28 (LLHQSDSLLLFVVLAFGLLLG), 37 to 57 (IGNTIGVLFTALLFGQMGFEF), 66 to 86 (FMLFIFCVGIEAGPHFFSVFL), 90 to 110 (IHYITLTLVILLTALLLTVGL), and 161 to 181 (NMGIGYALTYLVGLVGLMLVV). 2 RCK C-terminal domains span residues 206-291 (SDNE…NYRN) and 293-376 (KEVF…KIGF). 5 helical membrane-spanning segments follow: residues 386–406 (LVAFTTFFVLGLLIGSVSLVF), 409–429 (LEFGLGNAVGLLLAGILMGYL), 450–470 (LGLAVFMVSTGLKAGGGILDH), 476–496 (AVVLFSGMLVTTLPVLVGYLF), and 541–561 (TYAVANVMLTLAGSFIIGFWF).

This sequence belongs to the AAE transporter (TC 2.A.81) family. YbjL subfamily.

The protein resides in the cell membrane. The sequence is that of Putative transport protein ASA_2308 from Aeromonas salmonicida (strain A449).